A 243-amino-acid chain; its full sequence is UPF0502 protein Rmet_3697 (243 aa).

Over residues 1–11 (MTDTPDTPDTP) the composition is skewed to low complexity. The disordered stretch occupies residues 1-23 (MTDTPDTPDTPMATGASSRPPLR).

This sequence belongs to the UPF0502 family.

The protein is UPF0502 protein Rmet_3697 of Cupriavidus metallidurans (strain ATCC 43123 / DSM 2839 / NBRC 102507 / CH34) (Ralstonia metallidurans).